The chain runs to 129 residues: MQNSSLLKPPSIKAQHKIAKRRAVRRRRIDLNCGCSIFLHINCADNGFTHRGEHHCSSGREFRFYLGGSKSPIFQDTTRRGPVVHQNQDLPHPSPVQPQPTESIGSPQSLLQLPSLDDFDESFWADIFK.

Residues 13 to 28 carry the Nuclear localization signal motif; that stretch reads KAQHKIAKRRAVRRRR. The segment at 33–50 is a zinc-finger region; that stretch reads CGCSIFLHINCADNGFTH. The tract at residues 73–109 is disordered; the sequence is IFQDTTRRGPVVHQNQDLPHPSPVQPQPTESIGSPQS. Ser-109 is modified (phosphoserine; by host). Residues 115 to 129 form a transactivation region; the sequence is SLDDFDESFWADIFK.

It belongs to the geminiviridae transcriptional activator protein family. As to quaternary structure, monomer. Homodimer. Homooligomer. Self-interaction correlates with nuclear localization and efficient activation of transcription. Monomers suppress local silencing by interacting with and inactivating host adenosine kinase 2 (ADK2) in the cytoplasm. Interacts with and inhibits host SNF1 kinase. Binds to ssDNA. Phosphorylated at Ser-109 by A.thaliana KIN10.

The protein resides in the host nucleus. The protein localises to the host cytoplasm. Its function is as follows. Strong activator of the late viral genes promoters. Enhances the expression of the capsid protein and nuclear shuttle protein. Acts as a suppressor of RNA-mediated gene silencing, also known as post-transcriptional gene silencing (PTGS), a mechanism of plant viral defense that limits the accumulation of viral RNAs. Suppresses the host RNA silencing by inhibiting adenosine kinase 2 (ADK2), a kinase involved in a general methylation pathway. Also suppresses the host basal defense by interacting with and inhibiting SNF1 kinase, a key regulator of cell metabolism implicated in innate antiviral defense. Determines pathogenicity. This is Transcriptional activator protein from Cabbage leaf curl virus (isolate Jamaica) (CaLCuV).